The sequence spans 894 residues: Probable cytoplasmic aconitate hydratase (894 aa).

Substrate contacts are provided by residues Q87 and 207–209 (DSH). Residues C438, C504, and C507 each coordinate [4Fe-4S] cluster. Substrate-binding positions include R537, R542, and 781–782 (SR).

The protein belongs to the aconitase/IPM isomerase family. It depends on [4Fe-4S] cluster as a cofactor.

Its subcellular location is the cytoplasm. It is found in the cytosol. The catalysed reaction is citrate = D-threo-isocitrate. Its function is as follows. Catalyzes the isomerization of citrate to isocitrate via cis-aconitate. This is Probable cytoplasmic aconitate hydratase (aco1) from Dictyostelium discoideum (Social amoeba).